Here is a 154-residue protein sequence, read N- to C-terminus: Protein X (154 aa).

A mitochondrial targeting sequence region spans residues 68–117 (PCALRFTSARCMETTVNAHQILPKVLHKRTLGLPAMSTTDLEAYFKDCVF).

The protein belongs to the orthohepadnavirus protein X family. In terms of assembly, may form homodimer. May interact with host CEBPA, CFLAR, CREB1, DDB1, E4F1, HBXIP, HSPD1/HSP60, NFKBIA, POLR2E and SMAD4. Interacts with host SMC5-SMC6 complex and induces its degradation. Interacts with host TRPC4AP; leading to prevent ubiquitination of TRPC4AP. Interacts with host PLSCR1; this interaction promotes ubiquitination and degradation of HBx and impairs HBx-mediated cell proliferation. In terms of processing, a fraction may be phosphorylated in insect cells and HepG2 cells, a human hepatoblastoma cell line. Phosphorylated in vitro by host protein kinase C or mitogen-activated protein kinase. N-acetylated in insect cells.

The protein resides in the host cytoplasm. It localises to the host nucleus. Its subcellular location is the host mitochondrion. In terms of biological role, multifunctional protein that plays a role in silencing host antiviral defenses and promoting viral transcription. Does not seem to be essential for HBV infection. May be directly involved in development of cirrhosis and liver cancer (hepatocellular carcinoma). Most of cytosolic activities involve modulation of cytosolic calcium. The effect on apoptosis is controversial depending on the cell types in which the studies have been conducted. May induce apoptosis by localizing in mitochondria and causing loss of mitochondrial membrane potential. May also modulate apoptosis by binding host CFLAR, a key regulator of the death-inducing signaling complex (DISC). Promotes viral transcription by using the host E3 ubiquitin ligase DDB1 to target the SMC5-SMC6 complex to proteasomal degradation. This host complex would otherwise bind to viral episomal DNA, and prevents its transcription. Moderately stimulates transcription of many different viral and cellular transcription elements. Promoters and enhancers stimulated by HBx contain DNA binding sites for NF-kappa-B, AP-1, AP-2, c-EBP, ATF/CREB, or the calcium-activated factor NF-AT. The polypeptide is Protein X (Hepatitis B virus genotype A2 subtype adw2 (strain Rutter 1979) (HBV-A)).